A 229-amino-acid chain; its full sequence is Type III pantothenate kinase (229 aa).

An ATP-binding site is contributed by 6–13; that stretch reads NIGNSRQH. Substrate contacts are provided by residues Tyr77 and 81-84; that span reads GIDR. Asp83 functions as the Proton acceptor in the catalytic mechanism. A K(+)-binding site is contributed by Asp103. Thr106 contacts ATP. Residue Thr159 coordinates substrate.

It belongs to the type III pantothenate kinase family. In terms of assembly, homodimer. It depends on NH4(+) as a cofactor. The cofactor is K(+).

The protein localises to the cytoplasm. It carries out the reaction (R)-pantothenate + ATP = (R)-4'-phosphopantothenate + ADP + H(+). It participates in cofactor biosynthesis; coenzyme A biosynthesis; CoA from (R)-pantothenate: step 1/5. Catalyzes the phosphorylation of pantothenate (Pan), the first step in CoA biosynthesis. In Gloeobacter violaceus (strain ATCC 29082 / PCC 7421), this protein is Type III pantothenate kinase.